A 554-amino-acid chain; its full sequence is Asparagine--tRNA ligase, cytoplasmic (554 aa).

The protein belongs to the class-II aminoacyl-tRNA synthetase family.

It is found in the cytoplasm. It localises to the cytosol. It carries out the reaction tRNA(Asn) + L-asparagine + ATP = L-asparaginyl-tRNA(Asn) + AMP + diphosphate + H(+). Functionally, catalyzes the attachment of asparagine to tRNA(Asn) in a two-step reaction: asparagine is first activated by ATP to form Asn-AMP and then transferred to the acceptor end of tRNA(Asn). The protein is Asparagine--tRNA ligase, cytoplasmic of Saccharomyces cerevisiae (strain ATCC 204508 / S288c) (Baker's yeast).